The chain runs to 449 residues: Phosphoglucosamine mutase (449 aa).

Catalysis depends on Ser100, which acts as the Phosphoserine intermediate. Residues Ser100, Asp241, Asp243, and Asp245 each coordinate Mg(2+). Ser100 carries the post-translational modification Phosphoserine.

Belongs to the phosphohexose mutase family. Mg(2+) is required as a cofactor. Post-translationally, activated by phosphorylation.

It carries out the reaction alpha-D-glucosamine 1-phosphate = D-glucosamine 6-phosphate. Functionally, catalyzes the conversion of glucosamine-6-phosphate to glucosamine-1-phosphate. The polypeptide is Phosphoglucosamine mutase (Caldicellulosiruptor saccharolyticus (strain ATCC 43494 / DSM 8903 / Tp8T 6331)).